The following is a 721-amino-acid chain: Polyribonucleotide nucleotidyltransferase (721 aa).

D495 and D501 together coordinate Mg(2+). Positions 562-621 constitute a KH domain; sequence PRLLSFRIDPELIGTVIGPGGRTIKNITERTNTKIDIEDSGIVTIASHDGAAAEEAQKII. Residues 631–699 enclose the S1 motif domain; that stretch reads GEVFTGSITR…NRGRINLTLR (69 aa). Residues 700 to 721 form a disordered region; the sequence is GVPQSGESADSQPAPTPVAPLS.

This sequence belongs to the polyribonucleotide nucleotidyltransferase family. It depends on Mg(2+) as a cofactor.

Its subcellular location is the cytoplasm. It carries out the reaction RNA(n+1) + phosphate = RNA(n) + a ribonucleoside 5'-diphosphate. Involved in mRNA degradation. Catalyzes the phosphorolysis of single-stranded polyribonucleotides processively in the 3'- to 5'-direction. The chain is Polyribonucleotide nucleotidyltransferase from Synechococcus sp. (strain CC9311).